The primary structure comprises 181 residues: Putative manganese efflux pump MntP (181 aa).

The next 6 membrane-spanning stretches (helical) occupy residues 5–25, 36–56, 66–86, 102–122, 130–150, and 158–178; these read LIAL…IALG, MFKV…MGMV, GLFA…VMIV, IGLF…GLSL, ALAV…GLFI, and VGPY…VKLL.

This sequence belongs to the MntP (TC 9.B.29) family.

It is found in the cell membrane. Probably functions as a manganese efflux pump. The sequence is that of Putative manganese efflux pump MntP from Halalkalibacterium halodurans (strain ATCC BAA-125 / DSM 18197 / FERM 7344 / JCM 9153 / C-125) (Bacillus halodurans).